The sequence spans 1222 residues: ATP-dependent helicase/nuclease subunit A (1222 aa).

Residues 39–495 form the UvrD-like helicase ATP-binding domain; sequence QKRTAQQIEA…ILLKENFRSQ (457 aa). ATP is bound at residue 60 to 67; the sequence is ASAGSGKT. A UvrD-like helicase C-terminal domain is found at 524-810; it reads QLIAGSHAQT…NLMTIHKSKG (287 aa).

This sequence belongs to the helicase family. AddA subfamily. In terms of assembly, heterodimer of AddA and AddB/RexB. Mg(2+) is required as a cofactor.

It carries out the reaction Couples ATP hydrolysis with the unwinding of duplex DNA by translocating in the 3'-5' direction.. It catalyses the reaction ATP + H2O = ADP + phosphate + H(+). Functionally, the heterodimer acts as both an ATP-dependent DNA helicase and an ATP-dependent, dual-direction single-stranded exonuclease. Recognizes the chi site generating a DNA molecule suitable for the initiation of homologous recombination. The AddA nuclease domain is required for chi fragment generation; this subunit has the helicase and 3' -&gt; 5' nuclease activities. This is ATP-dependent helicase/nuclease subunit A from Streptococcus pyogenes serotype M4 (strain MGAS10750).